Consider the following 172-residue polypeptide: Glutamyl-tRNA(Gln) amidotransferase subunit C-4, mitochondrial (172 aa).

The N-terminal 23 residues, 1 to 23 (MIRIPFHLRQTPGRTLHSLVRSF), are a transit peptide targeting the mitochondrion. Positions 51 to 73 (PSKVPQRPHKSTIDGQSTPTRIP) are disordered.

This sequence belongs to the GatC family. As to quaternary structure, subunit of the heterotrimeric GatCAB amidotransferase (AdT) complex, composed of A, B and C subunits.

The protein resides in the mitochondrion. The enzyme catalyses L-glutamyl-tRNA(Gln) + L-glutamine + ATP + H2O = L-glutaminyl-tRNA(Gln) + L-glutamate + ADP + phosphate + H(+). Allows the formation of correctly charged Gln-tRNA(Gln) through the transamidation of misacylated Glu-tRNA(Gln) in the mitochondria. The reaction takes place in the presence of glutamine and ATP through an activated gamma-phospho-Glu-tRNA(Gln). The protein is Glutamyl-tRNA(Gln) amidotransferase subunit C-4, mitochondrial of Culex quinquefasciatus (Southern house mosquito).